A 387-amino-acid polypeptide reads, in one-letter code: tRNA pseudouridine synthase B (387 aa).

Aspartate 43 acts as the Nucleophile in catalysis.

The protein belongs to the pseudouridine synthase TruB family. Type 1 subfamily.

The enzyme catalyses uridine(55) in tRNA = pseudouridine(55) in tRNA. Its function is as follows. Responsible for synthesis of pseudouridine from uracil-55 in the psi GC loop of transfer RNAs. This is tRNA pseudouridine synthase B from Bifidobacterium longum subsp. infantis (strain ATCC 15697 / DSM 20088 / JCM 1222 / NCTC 11817 / S12).